The sequence spans 54 residues: Rubredoxin-1 (54 aa).

The 52-residue stretch at 1 to 52 folds into the Rubredoxin-like domain; the sequence is MKKWECVVCGFIYDEAEGLPDEGIEPGTAWNNVPEDWVCPDCGVGKDDFEMV. Residues Cys-6, Cys-9, Cys-39, and Cys-42 each coordinate Fe cation.

Belongs to the rubredoxin family. Fe(3+) serves as cofactor.

It is found in the cytoplasm. The protein operates within hydrocarbon metabolism; alkane degradation. In terms of biological role, involved in the hydrocarbon hydroxylating system, which transfers electrons from NADH to rubredoxin reductase and then through rubredoxin to alkane 1 monooxygenase. The polypeptide is Rubredoxin-1 (rubA) (Alcanivorax borkumensis (strain ATCC 700651 / DSM 11573 / NCIMB 13689 / SK2)).